The chain runs to 793 residues: Ent-copalyl diphosphate synthase, chloroplastic (793 aa).

Residues 1–47 (MPLASNPVAFLPSSTAHGDLPAAAFSRSSAGCLQLCRPLTPTSSLQC) constitute a chloroplast transit peptide. Positions 372 and 374 each coordinate Mg(2+). A DXDD motif motif is present at residues 372–375 (DIDD).

This sequence belongs to the terpene synthase family. The cofactor is Mg(2+).

The protein resides in the plastid. It localises to the chloroplast. It carries out the reaction (2E,6E,10E)-geranylgeranyl diphosphate = ent-copalyl diphosphate. It functions in the pathway plant hormone biosynthesis; gibberellin biosynthesis. Its function is as follows. Catalyzes the conversion of geranylgeranyl diphosphate (GGPP) to the gibberellin precursor ent-copalyl diphosphate (CPP). The polypeptide is Ent-copalyl diphosphate synthase, chloroplastic (Salvia miltiorrhiza (Chinese sage)).